Consider the following 138-residue polypeptide: ATP synthase epsilon chain (138 aa).

It belongs to the ATPase epsilon chain family. F-type ATPases have 2 components, CF(1) - the catalytic core - and CF(0) - the membrane proton channel. CF(1) has five subunits: alpha(3), beta(3), gamma(1), delta(1), epsilon(1). CF(0) has three main subunits: a, b and c.

It is found in the cell membrane. In terms of biological role, produces ATP from ADP in the presence of a proton gradient across the membrane. This Streptococcus pyogenes serotype M3 (strain ATCC BAA-595 / MGAS315) protein is ATP synthase epsilon chain.